A 223-amino-acid chain; its full sequence is Thiamine-phosphate synthase (223 aa).

Residues 42–46 (QLRDK) and asparagine 83 each bind 4-amino-2-methyl-5-(diphosphooxymethyl)pyrimidine. Mg(2+) is bound by residues aspartate 84 and aspartate 103. A 4-amino-2-methyl-5-(diphosphooxymethyl)pyrimidine-binding site is contributed by serine 122. Position 148–150 (148–150 (TPT)) interacts with 2-[(2R,5Z)-2-carboxy-4-methylthiazol-5(2H)-ylidene]ethyl phosphate. Position 151 (lysine 151) interacts with 4-amino-2-methyl-5-(diphosphooxymethyl)pyrimidine. Glycine 179 contacts 2-[(2R,5Z)-2-carboxy-4-methylthiazol-5(2H)-ylidene]ethyl phosphate.

The protein belongs to the thiamine-phosphate synthase family. It depends on Mg(2+) as a cofactor.

The enzyme catalyses 2-[(2R,5Z)-2-carboxy-4-methylthiazol-5(2H)-ylidene]ethyl phosphate + 4-amino-2-methyl-5-(diphosphooxymethyl)pyrimidine + 2 H(+) = thiamine phosphate + CO2 + diphosphate. The catalysed reaction is 2-(2-carboxy-4-methylthiazol-5-yl)ethyl phosphate + 4-amino-2-methyl-5-(diphosphooxymethyl)pyrimidine + 2 H(+) = thiamine phosphate + CO2 + diphosphate. It carries out the reaction 4-methyl-5-(2-phosphooxyethyl)-thiazole + 4-amino-2-methyl-5-(diphosphooxymethyl)pyrimidine + H(+) = thiamine phosphate + diphosphate. Its pathway is cofactor biosynthesis; thiamine diphosphate biosynthesis; thiamine phosphate from 4-amino-2-methyl-5-diphosphomethylpyrimidine and 4-methyl-5-(2-phosphoethyl)-thiazole: step 1/1. Its function is as follows. Condenses 4-methyl-5-(beta-hydroxyethyl)thiazole monophosphate (THZ-P) and 2-methyl-4-amino-5-hydroxymethyl pyrimidine pyrophosphate (HMP-PP) to form thiamine monophosphate (TMP). This chain is Thiamine-phosphate synthase, found in Mycolicibacterium paratuberculosis (strain ATCC BAA-968 / K-10) (Mycobacterium paratuberculosis).